A 1279-amino-acid chain; its full sequence is MAIVKRGGRTRAKQQQAPAKVNNGLGAGAGAGGGIQKAEFDITKKKEVGVSDLTLLSKITDEAINENLHKRFMNDTIYTYIGHVLISVNPFRDLGIYTLENLNKYKGRNRLEVPPHVFAIAESMYYHLKSYGENQCVIISGESGAGKTEAAKQIMQYIANVSVDSGNAEISKIKDMVLATNPLLESFGCAKTLRNNNSSRHGKYLEIKFSEGSYQPIAAHITNYLLEKQRVVSQITNERNFHIFYQFTKHCPPQYQQQFGIQGPETYVYTSAAKCITVDGIDDGKDFKDTLNAMNIIGLSQAEQDNIFRILALILWTGNISFVEDESGNAAIRDDSVTNFVAYLLDVNAEILKKAITERTIETSHGMKRGSTYHVPLNIVQATAVRDALAKGLYNNLFDWIVERVNLSLQGNQGQSEKSIGILDIYGFEIFEHNSFEQICINYVNEKLQQIFIQLTLKAEQDEYVQEQIKWTPIDYFNNKVVCDLIEATRPQPGLFAALNDSIKTAHADSDAADQVFAQRLSMVGASNRHFEDRRGKFIIKHYAGDVTYDVAGMTDKNKDAMLRDLLELLGTSSNAFVTQTLFPPNLLSELVDSKKRPETASDKIKKSANILVDTLSQATPSYIRTIKPNQTKKPRDYDNQQVLHQIKYLGLKENVRIRRAGFAYRSTFQRFVQRFYLLSPATGYAGDYIWQGDDLTAVKEILRACHIPTSEYQLGTTKVFIKTPETLFALEDMRDKYWHNMAARIQRAWRRYIKRKEDAAKTIQRAWRMKNHGNQFEQFRDYGNSLLQGRKERRRFSMLGSRAYMGDYLACNDKTGFGRFVVNQVGIKEPVVFSAKGVILLSKFGRSSKRFPRIFVLTKSNLYIIAEVLVEKRLQLQREFALPVHLIKSVGLSQLQDNWVAVCLLSPTTTTPDVFINLDFKTELVAQLKKLNSGLSILIGPTVQYQKKPGKYQTVKFAIGSGPHIPPLIDSYKSGTVTVNQGLPPTSKNPKRPRAKLGKVDYSKYYNRGVRSLAQPAFQSQPTASYRSEPAYPQPTTQLYATQHQPQQPQVPTRTASRKAPPPAPSTQTAAQVSTLPQAARKPAAPARPAKKIAPQPPVKKAVSPQPPAKKTVAAPPPPPPPPALSKPKHPTYRAMYDYDGSVAGSVPLVKDTIYYVLQINGKWGLVKTMDETQEGWSPIDYLQEESSPSASAATQSYAPTTASSNPVSTASSNTYTNTTQATTMLNGSLGNGLADALKAKKSEETTLAGSLADALKKRQGVTRDDSDAEDDDDDDDW.

Over residues methionine 1 to alanine 12 the composition is skewed to basic residues. The segment at methionine 1–leucine 25 is disordered. One can recognise a Myosin motor domain in the interval valine 48–aspartate 736. Glycine 141 to threonine 148 is a binding site for ATP. Phosphoserine is present on serine 371. Residues serine 419 to serine 502 are actin-binding. 2 IQ domains span residues histidine 740–alanine 760 and alanine 761–serine 786. Positions arginine 794–leucine 984 constitute a TH1 domain. Composition is skewed to polar residues over residues valine 980–lysine 989 and alanine 1018–tyrosine 1027. Disordered regions lie at residues valine 980 to valine 1001, leucine 1014 to proline 1132, serine 1189 to threonine 1216, and leucine 1253 to tryptophan 1279. Low complexity-rich tracts occupy residues threonine 1038–threonine 1056 and serine 1067–alanine 1095. Over residues alanine 1116–leucine 1126 the composition is skewed to pro residues. One can recognise an SH3 domain in the interval proline 1129 to serine 1189. Residues serine 1189–valine 1209 show a composition bias toward polar residues. The segment covering serine 1268 to tryptophan 1279 has biased composition (acidic residues).

It belongs to the TRAFAC class myosin-kinesin ATPase superfamily. Myosin family. In terms of processing, phosphorylation of the TEDS site (Ser-371) is required for the polarization of the actin cytoskeleton. Phosphorylation probably activates the myosin-I ATPase activity.

The protein resides in the cytoplasm. Its subcellular location is the cytoskeleton. It is found in the actin patch. Functionally, type-I myosin implicated in the organization of the actin cytoskeleton. Required for proper actin cytoskeleton polarization. At the cell cortex, assembles in patch-like structures together with proteins from the actin-polymerizing machinery and promotes actin assembly. Functions as actin nucleation-promoting factor (NPF) for the Arp2/3 complex. The protein is Myosin-1 (MYO1) of Lodderomyces elongisporus (strain ATCC 11503 / CBS 2605 / JCM 1781 / NBRC 1676 / NRRL YB-4239) (Yeast).